Reading from the N-terminus, the 558-residue chain is Glucose-6-phosphate isomerase (558 aa).

The active-site Proton donor is glutamate 363. Residues histidine 394 and lysine 522 contribute to the active site.

The protein belongs to the GPI family.

The protein localises to the cytoplasm. It catalyses the reaction alpha-D-glucose 6-phosphate = beta-D-fructose 6-phosphate. Its pathway is carbohydrate biosynthesis; gluconeogenesis. It functions in the pathway carbohydrate degradation; glycolysis; D-glyceraldehyde 3-phosphate and glycerone phosphate from D-glucose: step 2/4. Catalyzes the reversible isomerization of glucose-6-phosphate to fructose-6-phosphate. The sequence is that of Glucose-6-phosphate isomerase from Blochmanniella floridana.